A 374-amino-acid polypeptide reads, in one-letter code: Anthranilate O-methyltransferase 2 (374 aa).

Y18 contacts S-adenosyl-L-homocysteine. Q25 lines the anthranilate pocket. Residues C59, N64, D98, L99, S142, and Y143 each coordinate S-adenosyl-L-homocysteine. W164 serves as a coordination point for anthranilate. Mg(2+) is bound by residues E261 and F263.

This sequence belongs to the methyltransferase superfamily. Type-7 methyltransferase family. SABATH subfamily.

It carries out the reaction anthranilate + S-adenosyl-L-methionine = O-methyl anthranilate + S-adenosyl-L-homocysteine. In terms of biological role, methyltransferase involved in the biosynthesis of methyl anthranilate in response to stresses. Utilizes anthranilic acid as substrate. Produces exclusively the O-methyl ester. This Zea mays (Maize) protein is Anthranilate O-methyltransferase 2 (AAMT2).